Here is a 379-residue protein sequence, read N- to C-terminus: MDSRPTVVEIDLAALRHNFSLVQKRVPEGCGLLAVVKADAYGHGFQYVSEELEKLGVDAFAVAFLAEGVQLRMSGITRPVLILGGIYPGEERRCIGLNISTALFSLEQAAALDQAALEIKCYRKAHIHLKVDTGMGRLGVPYHEVPEFLAKLKQFKNLELEGIFSHFASADELDPEGIAFTKLQAERFNAAVEEARRQGYAPTYVHVANSAAILTQDLPYCNLARPGIILYGALPSGDFEGQVPSQPVMRLKSRVAMLKWVEPGTSISYGRRYVAAERALIASVPVGYADGYCRSLTNKGEALIRGQRAKVAGTVCMDWIMLDVTNVKGVAVGDDVTLLGPDPMGDCISAEEMAEKAGTIPYEVLCGIATRRVRRVYLG.

Residue K37 is the Proton acceptor; specific for D-alanine of the active site. K37 bears the N6-(pyridoxal phosphate)lysine mark. R137 lines the substrate pocket. Y269 (proton acceptor; specific for L-alanine) is an active-site residue. A substrate-binding site is contributed by M317.

The protein belongs to the alanine racemase family. It depends on pyridoxal 5'-phosphate as a cofactor.

It carries out the reaction L-alanine = D-alanine. It participates in amino-acid biosynthesis; D-alanine biosynthesis; D-alanine from L-alanine: step 1/1. Catalyzes the interconversion of L-alanine and D-alanine. May also act on other amino acids. The protein is Alanine racemase (alr) of Citrifermentans bemidjiense (strain ATCC BAA-1014 / DSM 16622 / JCM 12645 / Bem) (Geobacter bemidjiensis).